Here is a 367-residue protein sequence, read N- to C-terminus: Glutamate 5-kinase (367 aa).

K10 is an ATP binding site. Substrate is bound by residues S50, D137, and N149. Residues 169-170 and 211-217 each bind ATP; these read TD and TGGMSTK. Residues 275–353 enclose the PUA domain; it reads AGEITVDEGA…QEIDAILGYE (79 aa).

The protein belongs to the glutamate 5-kinase family.

The protein resides in the cytoplasm. The enzyme catalyses L-glutamate + ATP = L-glutamyl 5-phosphate + ADP. It participates in amino-acid biosynthesis; L-proline biosynthesis; L-glutamate 5-semialdehyde from L-glutamate: step 1/2. Its function is as follows. Catalyzes the transfer of a phosphate group to glutamate to form L-glutamate 5-phosphate. The polypeptide is Glutamate 5-kinase (Shigella flexneri).